A 173-amino-acid polypeptide reads, in one-letter code: Alkyl hydroperoxide reductase AhpD (173 aa).

The active-site Proton donor is Cys131. Cys131 and Cys134 are oxidised to a cystine. The Cysteine sulfenic acid (-SOH) intermediate role is filled by Cys134.

The protein belongs to the AhpD family.

It carries out the reaction N(6)-[(R)-dihydrolipoyl]-L-lysyl-[lipoyl-carrier protein] + a hydroperoxide = N(6)-[(R)-lipoyl]-L-lysyl-[lipoyl-carrier protein] + an alcohol + H2O. Functionally, antioxidant protein with alkyl hydroperoxidase activity. Required for the reduction of the AhpC active site cysteine residues and for the regeneration of the AhpC enzyme activity. This is Alkyl hydroperoxide reductase AhpD from Rhizorhabdus wittichii (strain DSM 6014 / CCUG 31198 / JCM 15750 / NBRC 105917 / EY 4224 / RW1) (Sphingomonas wittichii).